The primary structure comprises 351 residues: tRNA pseudouridine synthase D (351 aa).

D96 functions as the Nucleophile in the catalytic mechanism. Residues 174–304 (GAPNYFGPQR…MKPERRPLVA (131 aa)) form the TRUD domain. The disordered stretch occupies residues 244–268 (VLPGEPEPSGAGPTGPLWGDGGTLA).

Belongs to the pseudouridine synthase TruD family.

The catalysed reaction is uridine(13) in tRNA = pseudouridine(13) in tRNA. In terms of biological role, responsible for synthesis of pseudouridine from uracil-13 in transfer RNAs. The protein is tRNA pseudouridine synthase D of Marinobacter nauticus (strain ATCC 700491 / DSM 11845 / VT8) (Marinobacter aquaeolei).